The following is a 334-amino-acid chain: Fructose-1,6-bisphosphatase class 1 (334 aa).

The Mg(2+) site is built by Glu89, Asp112, Leu114, and Asp115. Substrate-binding positions include 115-118 (DGSS), Asn208, Tyr241, 259-261 (YLY), and Lys271. A Mg(2+)-binding site is contributed by Glu277.

The protein belongs to the FBPase class 1 family. As to quaternary structure, homotetramer. Requires Mg(2+) as cofactor.

It localises to the cytoplasm. The catalysed reaction is beta-D-fructose 1,6-bisphosphate + H2O = beta-D-fructose 6-phosphate + phosphate. Its pathway is carbohydrate biosynthesis; gluconeogenesis. The protein is Fructose-1,6-bisphosphatase class 1 of Pectobacterium atrosepticum (strain SCRI 1043 / ATCC BAA-672) (Erwinia carotovora subsp. atroseptica).